We begin with the raw amino-acid sequence, 148 residues long: MGQFIFVSFGLLVVLLSLSGAGAGFCCPLGWSSYDLYCYKVFKQQMNWTDAEKFCTEQHTGSHLVSFHSSEEADFVVNMTYPILKLDFVWIGLSNVWNQCNSEWSDGTKLDYKDWSGESECIASKTVENQWWTKSCSRTHYVVCKFQA.

The first 23 residues, 1–23, serve as a signal peptide directing secretion; it reads MGQFIFVSFGLLVVLLSLSGAGA. Cysteine 27 and cysteine 38 are disulfide-bonded. Residues 34 to 145 form the C-type lectin domain; that stretch reads YDLYCYKVFK…CSRTHYVVCK (112 aa). Residues asparagine 47 and asparagine 78 are each glycosylated (N-linked (GlcNAc...) asparagine). Cystine bridges form between cysteine 55–cysteine 144 and cysteine 121–cysteine 136.

It belongs to the snaclec family. In terms of assembly, heteromultimer; disulfide-linked. In terms of tissue distribution, expressed by the venom gland.

The protein resides in the secreted. Its function is as follows. Interferes with one step of hemostasis (modulation of platelet aggregation, or coagulation cascade, for example). In Trimeresurus stejnegeri (Chinese green tree viper), this protein is Snaclec stejaggregin-A subunit beta-2.